The following is a 256-amino-acid chain: Ras-related protein Rab-26 (256 aa).

Positions Met1 to Val53 are disordered. Residues Pro38–Pro48 show a composition bias toward pro residues. GTP contacts are provided by Ser72, Gly73, Val74, Gly75, Lys76, Thr77, Cys78, Ser95, and Thr96. A Mg(2+)-binding site is contributed by Thr77. 2 consecutive short sequence motifs (switch) follow at residues Gly86 to Phe101 and Asp119 to Asp136. The Mg(2+) site is built by Thr96 and Asp119. GTP-binding residues include Gly122, Asn177, Lys178, Asp180, Ala208, and Lys209. Residues Cys253 and Cys254 are each lipidated (S-geranylgeranyl cysteine).

Belongs to the small GTPase superfamily. Rab family. It depends on Mg(2+) as a cofactor.

The protein localises to the cell membrane. The enzyme catalyses GTP + H2O = GDP + phosphate + H(+). Its activity is regulated as follows. Regulated by guanine nucleotide exchange factors (GEFs) which promote the exchange of bound GDP for free GTP. Regulated by GTPase activating proteins (GAPs) which increase the GTP hydrolysis activity. Inhibited by GDP dissociation inhibitors (GDIs). Functionally, the small GTPases Rab are key regulators of intracellular membrane trafficking, from the formation of transport vesicles to their fusion with membranes. Rabs cycle between an inactive GDP-bound form and an active GTP-bound form that is able to recruit to membranes different set of downstream effectors directly responsible for vesicle formation, movement, tethering and fusion. RAB26 mediates transport of ADRA2A and ADRA2B from the Golgi to the cell membrane. Plays a role in the maturation of zymogenic granules and in pepsinogen secretion in the stomach. Plays a role in the secretion of amylase from acinar granules in the parotid gland. This chain is Ras-related protein Rab-26 (RAB26), found in Bos taurus (Bovine).